Here is a 158-residue protein sequence, read N- to C-terminus: MPLLLTGKQFHNDLKTNKCLAIFAPLEGGYETRLLRRMRAKGFKTFITSARGLGDPEVFLLKLHGVRPPHLGHQSVGRNGALGEVQQVIPQASELFNENDKNKLLWLLEGQVLSQSELESLIEICTNDNKLSIVVEMGGSRKLEWKPLSNYILDEFES.

The protein belongs to the complex I NdhN subunit family. In terms of assembly, NDH-1 can be composed of about 15 different subunits; different subcomplexes with different compositions have been identified which probably have different functions.

The protein localises to the cellular thylakoid membrane. The enzyme catalyses a plastoquinone + NADH + (n+1) H(+)(in) = a plastoquinol + NAD(+) + n H(+)(out). The catalysed reaction is a plastoquinone + NADPH + (n+1) H(+)(in) = a plastoquinol + NADP(+) + n H(+)(out). Its function is as follows. NDH-1 shuttles electrons from an unknown electron donor, via FMN and iron-sulfur (Fe-S) centers, to quinones in the respiratory and/or the photosynthetic chain. The immediate electron acceptor for the enzyme in this species is believed to be plastoquinone. Couples the redox reaction to proton translocation, and thus conserves the redox energy in a proton gradient. Cyanobacterial NDH-1 also plays a role in inorganic carbon-concentration. The sequence is that of NAD(P)H-quinone oxidoreductase subunit N from Prochlorococcus marinus (strain MIT 9312).